The chain runs to 639 residues: Chaperone protein DnaK (639 aa).

Thr198 bears the Phosphothreonine; by autocatalysis mark. Over residues 603–618 the composition is skewed to low complexity; the sequence is AKAQTQGGAQEGAAKQ. Positions 603–639 are disordered; that stretch reads AKAQTQGGAQEGAAKQSNATADDVVDAEFEEVKDDKK. Residues 625-639 show a composition bias toward acidic residues; it reads DVVDAEFEEVKDDKK.

The protein belongs to the heat shock protein 70 family.

Its function is as follows. Acts as a chaperone. The sequence is that of Chaperone protein DnaK from Shewanella sp. (strain ANA-3).